A 253-amino-acid polypeptide reads, in one-letter code: Probable transcriptional regulatory protein SynRCC307_1833 (253 aa).

It belongs to the TACO1 family.

It localises to the cytoplasm. This is Probable transcriptional regulatory protein SynRCC307_1833 from Synechococcus sp. (strain RCC307).